A 357-amino-acid chain; its full sequence is Beta-hexosaminidase (357 aa).

Substrate-binding positions include Asp-66, Arg-74, Arg-140, and Lys-170 to His-171. The active-site Proton donor/acceptor is His-183. Catalysis depends on Asp-254, which acts as the Nucleophile.

This sequence belongs to the glycosyl hydrolase 3 family. NagZ subfamily.

It localises to the cytoplasm. It carries out the reaction Hydrolysis of terminal non-reducing N-acetyl-D-hexosamine residues in N-acetyl-beta-D-hexosaminides.. It participates in cell wall biogenesis; peptidoglycan recycling. In terms of biological role, plays a role in peptidoglycan recycling by cleaving the terminal beta-1,4-linked N-acetylglucosamine (GlcNAc) from peptide-linked peptidoglycan fragments, giving rise to free GlcNAc, anhydro-N-acetylmuramic acid and anhydro-N-acetylmuramic acid-linked peptides. The polypeptide is Beta-hexosaminidase (Chromobacterium violaceum (strain ATCC 12472 / DSM 30191 / JCM 1249 / CCUG 213 / NBRC 12614 / NCIMB 9131 / NCTC 9757 / MK)).